A 101-amino-acid chain; its full sequence is Feather keratin Cos2-3 (101 aa).

The residue at position 2 (Ser-2) is an N-acetylserine.

It belongs to the avian keratin family. As to quaternary structure, the avian keratins (F-ker, S-ker, C-ker and B-ker) are a complex mixture of very similar polypeptides.

This Columba livia (Rock dove) protein is Feather keratin Cos2-3.